A 439-amino-acid polypeptide reads, in one-letter code: MSSRGKWSWLHSPITGGILLIIAATTALFWANLAPSLYHHAWHDALFSVSSGFSATIYSISLHQIVNEFLMAIFFFFIGLEMKRELLDDDLSTLKKAALPLFSALGGVVLPASIYYFFNAGTDTVNGWGIPMATDIAFALGVLAMVGSRVPLSLKIFLSALAIGDDLMAVLVIAIFYTEQIFVNELLVGFLGLIVLAVANKMGVRNRLVYYSIGLIIVWISFLASGVHATIAGVAVAFTIPSRREISMGNYLITAKGLLSGLDKERHNKADVLTKNAISSLREIRDLSYQASNPLQLKEEALHPISALFIVPLFALGNAGVIVDDSMLAELTNPIVLGIAAGLIIGKPLGIFLFAKLLTLLKLGQLPEGVTWRHIIGTGFLAGMGFTMSLFISDLAFSEPEQKIVAKVAVLLASIISGIVGYLILISAPVIKKDNKLNS.

Transmembrane regions (helical) follow at residues 14–34 (ITGG…ANLA), 60–80 (ISLH…FIGL), 98–118 (ALPL…YYFF), 127–147 (GWGI…AMVG), 156–176 (IFLS…IAIF), 179–199 (EQIF…LAVA), 213–233 (IGLI…TIAG), 303–323 (HPIS…GVIV), 335–355 (IVLG…FLFA), 375–395 (IIGT…ISDL), and 408–428 (VAVL…LISA).

Belongs to the NhaA Na(+)/H(+) (TC 2.A.33) antiporter family.

It is found in the cell inner membrane. The enzyme catalyses Na(+)(in) + 2 H(+)(out) = Na(+)(out) + 2 H(+)(in). Na(+)/H(+) antiporter that extrudes sodium in exchange for external protons. The sequence is that of Na(+)/H(+) antiporter NhaA 1 from Psychromonas ingrahamii (strain DSM 17664 / CCUG 51855 / 37).